The primary structure comprises 233 residues: Lipoprotein-releasing system ATP-binding protein LolD (233 aa).

The ABC transporter domain maps to L6–E233. ATP is bound at residue G42–S49.

The protein belongs to the ABC transporter superfamily. Lipoprotein translocase (TC 3.A.1.125) family. In terms of assembly, the complex is composed of two ATP-binding proteins (LolD) and two transmembrane proteins (LolC and LolE).

The protein localises to the cell inner membrane. In terms of biological role, part of the ABC transporter complex LolCDE involved in the translocation of mature outer membrane-directed lipoproteins, from the inner membrane to the periplasmic chaperone, LolA. Responsible for the formation of the LolA-lipoprotein complex in an ATP-dependent manner. Such a release is dependent of the sorting-signal (absence of an Asp at position 2 of the mature lipoprotein) and of LolA. In Escherichia coli (strain K12), this protein is Lipoprotein-releasing system ATP-binding protein LolD.